The sequence spans 253 residues: Triosephosphate isomerase (253 aa).

9 to 11 (NWK) is a substrate binding site. His-96 functions as the Electrophile in the catalytic mechanism. The Proton acceptor role is filled by Glu-168. Substrate is bound by residues Gly-174, Ser-213, and 234–235 (GG).

It belongs to the triosephosphate isomerase family. Homodimer.

It is found in the cytoplasm. It catalyses the reaction D-glyceraldehyde 3-phosphate = dihydroxyacetone phosphate. It participates in carbohydrate biosynthesis; gluconeogenesis. It functions in the pathway carbohydrate degradation; glycolysis; D-glyceraldehyde 3-phosphate from glycerone phosphate: step 1/1. Its function is as follows. Involved in the gluconeogenesis. Catalyzes stereospecifically the conversion of dihydroxyacetone phosphate (DHAP) to D-glyceraldehyde-3-phosphate (G3P). The polypeptide is Triosephosphate isomerase (Hydrogenovibrio crunogenus (strain DSM 25203 / XCL-2) (Thiomicrospira crunogena)).